The primary structure comprises 179 residues: Large ribosomal subunit protein uL5 (179 aa).

This sequence belongs to the universal ribosomal protein uL5 family. Part of the 50S ribosomal subunit; part of the 5S rRNA/L5/L18/L25 subcomplex. Contacts the 5S rRNA and the P site tRNA. Forms a bridge to the 30S subunit in the 70S ribosome.

In terms of biological role, this is one of the proteins that bind and probably mediate the attachment of the 5S RNA into the large ribosomal subunit, where it forms part of the central protuberance. In the 70S ribosome it contacts protein S13 of the 30S subunit (bridge B1b), connecting the 2 subunits; this bridge is implicated in subunit movement. Contacts the P site tRNA; the 5S rRNA and some of its associated proteins might help stabilize positioning of ribosome-bound tRNAs. The chain is Large ribosomal subunit protein uL5 from Burkholderia cenocepacia (strain HI2424).